A 384-amino-acid polypeptide reads, in one-letter code: Chaperone protein DnaJ (384 aa).

Residues 5–70 (DYYEILGVTR…QKKRIYDTYG (66 aa)) enclose the J domain. A CR-type zinc finger spans residues 134-212 (GTEKEIRLQT…CNGQGRTRQS (79 aa)). Positions 147, 150, 164, 167, 186, 189, 200, and 203 each coordinate Zn(2+). 4 CXXCXGXG motif repeats span residues 147–154 (CEECNGSG), 164–171 (CPVCQGSG), 186–193 (CTRCQGMG), and 200–207 (CKTCNGQG). Positions 352–384 (KEKSGEKVRKWPWSKRKDREKKSMAESTREART) are disordered.

It belongs to the DnaJ family. In terms of assembly, homodimer. It depends on Zn(2+) as a cofactor.

The protein localises to the cytoplasm. Its function is as follows. Participates actively in the response to hyperosmotic and heat shock by preventing the aggregation of stress-denatured proteins and by disaggregating proteins, also in an autonomous, DnaK-independent fashion. Unfolded proteins bind initially to DnaJ; upon interaction with the DnaJ-bound protein, DnaK hydrolyzes its bound ATP, resulting in the formation of a stable complex. GrpE releases ADP from DnaK; ATP binding to DnaK triggers the release of the substrate protein, thus completing the reaction cycle. Several rounds of ATP-dependent interactions between DnaJ, DnaK and GrpE are required for fully efficient folding. Also involved, together with DnaK and GrpE, in the DNA replication of plasmids through activation of initiation proteins. In Syntrophobacter fumaroxidans (strain DSM 10017 / MPOB), this protein is Chaperone protein DnaJ.